Reading from the N-terminus, the 53-residue chain is Mannose/glucose-specific lectin alpha 2 chain (53 aa).

The protein belongs to the leguminous lectin family. Tetramer of two alpha and two beta chains.

This Lathyrus ochrus (Cyprus-vetch) protein is Mannose/glucose-specific lectin alpha 2 chain.